Reading from the N-terminus, the 726-residue chain is Catalase-peroxidase (726 aa).

A compositionally biased stretch (polar residues) spans 1 to 13 (MSMSEETNNSLSS). The segment at 1–34 (MSMSEETNNSLSSGKCPFHHGGSDQSAGEGTGSR) is disordered. The tryptophyl-tyrosyl-methioninium (Trp-Tyr) (with M-252) cross-link spans 105-226 (WHGAGTYRSV…LAATEMGLIY (122 aa)). Catalysis depends on H106, which acts as the Proton acceptor. A cross-link (tryptophyl-tyrosyl-methioninium (Tyr-Met) (with W-105)) is located at residues 226 to 252 (YVNPEGPNASGEPLSAAAAIRATFGNM). A heme b-binding site is contributed by H267.

The protein belongs to the peroxidase family. Peroxidase/catalase subfamily. Homodimer or homotetramer. The cofactor is heme b. Post-translationally, formation of the three residue Trp-Tyr-Met cross-link is important for the catalase, but not the peroxidase activity of the enzyme.

It catalyses the reaction H2O2 + AH2 = A + 2 H2O. The enzyme catalyses 2 H2O2 = O2 + 2 H2O. Functionally, bifunctional enzyme with both catalase and broad-spectrum peroxidase activity. This Enterobacter sp. (strain 638) protein is Catalase-peroxidase.